Here is a 271-residue protein sequence, read N- to C-terminus: MSGFLLALRTTFGFLSTIPVGMSMEGLDELVKRSYLQTFAGIVLGSMIGIFAYLTESFLPSTISAVLIMVFIYYITGLNHLDGLGDFGDGATAHGSLEKKVNALKDMSLGIGGVSYTVLALIALYASISSLQAEVLFFSDNAALIIAISLLIAEIGAKQAMLTVAAFGKPIHEGLGSMIINNTTFPRYAVSFVLGALVCVLAFGTLGIIGYISAIVTAFVILNISIRHFKGINGDCIGTSNEIARIIVLMVLTVAITAVNNGYGGLFWTPL.

A run of 7 helical transmembrane segments spans residues 4-24 (FLLALRTTFGFLSTIPVGMSM), 35-55 (YLQTFAGIVLGSMIGIFAYLT), 58-78 (FLPSTISAVLIMVFIYYITGL), 108-128 (SLGIGGVSYTVLALIALYASI), 135-155 (VLFFSDNAALIIAISLLIAEI), 192-212 (FVLGALVCVLAFGTLGIIGYI), and 246-266 (IIVLMVLTVAITAVNNGYGGL).

The protein belongs to the CobS family. Mg(2+) is required as a cofactor.

The protein localises to the cell membrane. It catalyses the reaction alpha-ribazole + adenosylcob(III)inamide-GDP = adenosylcob(III)alamin + GMP + H(+). The enzyme catalyses alpha-ribazole 5'-phosphate + adenosylcob(III)inamide-GDP = adenosylcob(III)alamin 5'-phosphate + GMP + H(+). It functions in the pathway cofactor biosynthesis; adenosylcobalamin biosynthesis; adenosylcobalamin from cob(II)yrinate a,c-diamide: step 7/7. In terms of biological role, joins adenosylcobinamide-GDP and alpha-ribazole to generate adenosylcobalamin (Ado-cobalamin). Also synthesizes adenosylcobalamin 5'-phosphate from adenosylcobinamide-GDP and alpha-ribazole 5'-phosphate. This chain is Adenosylcobinamide-GDP ribazoletransferase, found in Methanococcoides burtonii (strain DSM 6242 / NBRC 107633 / OCM 468 / ACE-M).